A 429-amino-acid chain; its full sequence is Palmitoyltransferase SWF1 (429 aa).

Over 1–3 the chain is Lumenal; the sequence is MGT. The chain crosses the membrane as a helical span at residues 4–24; the sequence is IAIIAAVILGISFMTFVAFFG. Over 25–79 the chain is Cytoplasmic; sequence RLPALRNTPISFLHRLIWIHLPNGILTVDRTLTNGRLTTSLTRLGRHLWYDQHPT. The chain crosses the membrane as a helical span at residues 80 to 100; that stretch reads ILIFFFLLLSVGEYLYLPVAW. The Lumenal portion of the chain corresponds to 101–112; the sequence is PHFSFTHKFFGT. Residues 113-133 form a helical membrane-spanning segment; that stretch reads IAILCPYIFLYLSAYTDPGVI. Residues 134–201 are Cytoplasmic-facing; the sequence is NAKTHVREMA…CVGANNQRWF (68 aa). A DHHC domain is found at 156–206; that stretch reads TSCETCHLLKPARSKHCSICKKCVGRMDHHCIFINNCVGANNQRWFILLLL. A helical transmembrane segment spans residues 202 to 222; sequence ILLLLSTAILTLYGGVLGLVI. Topologically, residues 223–274 are lumenal; the sequence is IRAKIQARFPYWTLMPWWTSTQAWNSGDLDFHRWLLLWSWGLQSGVAMGGVT. A helical membrane pass occupies residues 275-295; that stretch reads LLALLTTPLVWGLLGYHLWLV. Residues 296–429 lie on the Cytoplasmic side of the membrane; it reads YCGTTTNESM…ERGRNRRRSS (134 aa). The segment covering 408-421 has biased composition (basic and acidic residues); sequence GRSPVDEREFGRER. Residues 408–429 are disordered; that stretch reads GRSPVDEREFGRERGRNRRRSS.

Belongs to the DHHC palmitoyltransferase family. SWF1 subfamily.

The protein localises to the endoplasmic reticulum membrane. The catalysed reaction is L-cysteinyl-[protein] + hexadecanoyl-CoA = S-hexadecanoyl-L-cysteinyl-[protein] + CoA. Palmitoyltransferase that targets several endosomal SNAREs. Palmitoylates the SNAREs at cysteine residues close to the cytoplasmic end of their transmembrane domain. May have a role in the cellular quality control of transmembrane domain-containing proteins. The protein is Palmitoyltransferase SWF1 (swf-1) of Neurospora crassa (strain ATCC 24698 / 74-OR23-1A / CBS 708.71 / DSM 1257 / FGSC 987).